A 135-amino-acid polypeptide reads, in one-letter code: uncharacterized protein (135 aa).

The next 3 membrane-spanning stretches (helical) occupy residues 12 to 32, 68 to 88, and 98 to 118; these read IPILLLVLYIALGVFIQYNGI, SMIGGMPGYLPLYAYLCAKFC, and GILYFSVVLFIMTSVIWFYLF.

Its subcellular location is the cell membrane. This is an uncharacterized protein from Methanocaldococcus jannaschii (strain ATCC 43067 / DSM 2661 / JAL-1 / JCM 10045 / NBRC 100440) (Methanococcus jannaschii).